The primary structure comprises 95 residues: CRISPR-associated endoribonuclease Cas2 (95 aa).

Asp-9 contributes to the Mg(2+) binding site.

This sequence belongs to the CRISPR-associated endoribonuclease Cas2 protein family. Homodimer, forms a heterotetramer with a Cas1 homodimer. Mg(2+) is required as a cofactor.

Its function is as follows. CRISPR (clustered regularly interspaced short palindromic repeat), is an adaptive immune system that provides protection against mobile genetic elements (viruses, transposable elements and conjugative plasmids). CRISPR clusters contain sequences complementary to antecedent mobile elements and target invading nucleic acids. CRISPR clusters are transcribed and processed into CRISPR RNA (crRNA). Functions as a ssRNA-specific endoribonuclease. Involved in the integration of spacer DNA into the CRISPR cassette. The protein is CRISPR-associated endoribonuclease Cas2 of Methylorubrum extorquens (strain CM4 / NCIMB 13688) (Methylobacterium extorquens).